The chain runs to 150 residues: Deoxyuridine 5'-triphosphate nucleotidohydrolase (150 aa).

Substrate-binding positions include 68–70, Asn-81, 85–87, and Lys-95; these read RSG and TID.

The protein belongs to the dUTPase family. Mg(2+) serves as cofactor.

The catalysed reaction is dUTP + H2O = dUMP + diphosphate + H(+). It participates in pyrimidine metabolism; dUMP biosynthesis; dUMP from dCTP (dUTP route): step 2/2. Its function is as follows. This enzyme is involved in nucleotide metabolism: it produces dUMP, the immediate precursor of thymidine nucleotides and it decreases the intracellular concentration of dUTP so that uracil cannot be incorporated into DNA. This is Deoxyuridine 5'-triphosphate nucleotidohydrolase from Rickettsia bellii (strain OSU 85-389).